A 103-amino-acid polypeptide reads, in one-letter code: G0/G1 switch protein 2 (103 aa).

Residues 80 to 103 are disordered; it reads LQEKGKQQDTVLGGRALSNRQHAS.

As to quaternary structure, directly interacts with BCL2; this interaction prevents the formation of the anti-apoptotic BAX-BCL2 complex. As to expression, widely expressed with highest levels in peripheral blood, skeletal muscle and heart, followed by kidney and liver.

The protein resides in the mitochondrion. Promotes apoptosis by binding to BCL2, hence preventing the formation of protective BCL2-BAX heterodimers. This is G0/G1 switch protein 2 (G0S2) from Homo sapiens (Human).